Reading from the N-terminus, the 245-residue chain is Ribosome maturation factor RimP (245 aa).

Belongs to the RimP family.

It localises to the cytoplasm. In terms of biological role, required for maturation of 30S ribosomal subunits. This is Ribosome maturation factor RimP from Verminephrobacter eiseniae (strain EF01-2).